A 559-amino-acid chain; its full sequence is Nuclear speckle splicing regulatory protein 1 (559 aa).

The tract at residues 22–57 (VLQKPSVFGNDSDDDDDETSVSESLQREAAKKQAMK) is disordered. A phosphoserine mark is found at serine 27 and serine 33. Residues 32–41 (DSDDDDDETS) are compositionally biased toward acidic residues. Residues 105–179 (IHNLLKAVEI…EARLDVTKQR (75 aa)) adopt a coiled-coil conformation. Residues 107–171 (NLLKAVEIRK…RERRAAALEA (65 aa)) form a necessary for alternative splicing activity region. A disordered region spans residues 195 to 534 (EEEVPTCSFR…AKRSNEETVT (340 aa)). Over residues 204 to 219 (REARSEIKEEKSKGYS) the composition is skewed to basic and acidic residues. A Glycyl lysine isopeptide (Lys-Gly) (interchain with G-Cter in SUMO2) cross-link involves residue lysine 211. 3 positions are modified to phosphoserine: serine 249, serine 255, and serine 256. The segment covering 251–274 (FDAKSSENDEMEGDKGNCRREKGT) has biased composition (basic and acidic residues). Threonine 276 carries the phosphothreonine modification. Lysine 282 participates in a covalent cross-link: Glycyl lysine isopeptide (Lys-Gly) (interchain with G-Cter in SUMO2). Composition is skewed to basic and acidic residues over residues 314-343 (EKRE…EKRD), 351-488 (SHRD…RNPE), and 502-521 (RITE…HETV). Positions 379-428 (KREKDREKYPSREQERHRQRNNYDRHNEKGCEKEEKSKEKEEHVKARKER) form a coiled coil. Serine 458 carries the post-translational modification Phosphoserine.

It belongs to the NSRP1 family. Interacts (via C-terminus) with SRSF1. Interacts (via C-terminus) with SRSF2.

The protein localises to the nucleus. The protein resides in the nucleus speckle. RNA-binding protein that mediates pre-mRNA alternative splicing regulation. In Bos taurus (Bovine), this protein is Nuclear speckle splicing regulatory protein 1 (NSRP1).